The sequence spans 174 residues: Shikimate kinase 2 (174 aa).

12 to 17 (GCGKTT) contributes to the ATP binding site. The Mg(2+) site is built by T16 and D32. 3 residues coordinate substrate: D34, R58, and G79. Positions 112–126 (QAAPEEDLRPTLTGK) are LID domain. Residue R120 coordinates ATP. Substrate is bound at residue R139.

The protein belongs to the shikimate kinase family. AroL subfamily. As to quaternary structure, monomer. Mg(2+) is required as a cofactor.

It is found in the cytoplasm. It catalyses the reaction shikimate + ATP = 3-phosphoshikimate + ADP + H(+). Its pathway is metabolic intermediate biosynthesis; chorismate biosynthesis; chorismate from D-erythrose 4-phosphate and phosphoenolpyruvate: step 5/7. Functionally, catalyzes the specific phosphorylation of the 3-hydroxyl group of shikimic acid using ATP as a cosubstrate. The chain is Shikimate kinase 2 from Shigella boydii serotype 18 (strain CDC 3083-94 / BS512).